The following is a 271-amino-acid chain: Enolase-phosphatase E1 (271 aa).

Residues Asp-18 and Glu-20 each contribute to the Mg(2+) site. Residues 144-145 (SS) and Lys-194 contribute to the substrate site. Asp-221 provides a ligand contact to Mg(2+).

This sequence belongs to the HAD-like hydrolase superfamily. MasA/MtnC family. As to quaternary structure, monomer. Requires Mg(2+) as cofactor.

It is found in the cytoplasm. It localises to the nucleus. The catalysed reaction is 5-methylsulfanyl-2,3-dioxopentyl phosphate + H2O = 1,2-dihydroxy-5-(methylsulfanyl)pent-1-en-3-one + phosphate. It functions in the pathway amino-acid biosynthesis; L-methionine biosynthesis via salvage pathway; L-methionine from S-methyl-5-thio-alpha-D-ribose 1-phosphate: step 3/6. Its pathway is amino-acid biosynthesis; L-methionine biosynthesis via salvage pathway; L-methionine from S-methyl-5-thio-alpha-D-ribose 1-phosphate: step 4/6. In terms of biological role, bifunctional enzyme that catalyzes the enolization of 2,3-diketo-5-methylthiopentyl-1-phosphate (DK-MTP-1-P) into the intermediate 2-hydroxy-3-keto-5-methylthiopentenyl-1-phosphate (HK-MTPenyl-1-P), which is then dephosphorylated to form the acireductone 1,2-dihydroxy-3-keto-5-methylthiopentene (DHK-MTPene). This Candida albicans (strain WO-1) (Yeast) protein is Enolase-phosphatase E1.